The following is a 691-amino-acid chain: Elongation factor G (691 aa).

One can recognise a tr-type G domain in the interval 8-283 (KKVRNIGIAA…AVVAYLPAPD (276 aa)). GTP-binding positions include 17 to 24 (AHIDAGKT), 81 to 85 (DTPGH), and 135 to 138 (NKMD).

This sequence belongs to the TRAFAC class translation factor GTPase superfamily. Classic translation factor GTPase family. EF-G/EF-2 subfamily.

It localises to the cytoplasm. Functionally, catalyzes the GTP-dependent ribosomal translocation step during translation elongation. During this step, the ribosome changes from the pre-translocational (PRE) to the post-translocational (POST) state as the newly formed A-site-bound peptidyl-tRNA and P-site-bound deacylated tRNA move to the P and E sites, respectively. Catalyzes the coordinated movement of the two tRNA molecules, the mRNA and conformational changes in the ribosome. This is Elongation factor G from Campylobacter jejuni subsp. jejuni serotype O:23/36 (strain 81-176).